Reading from the N-terminus, the 465-residue chain is Asparagine--tRNA ligase (465 aa).

It belongs to the class-II aminoacyl-tRNA synthetase family. In terms of assembly, homodimer.

Its subcellular location is the cytoplasm. The enzyme catalyses tRNA(Asn) + L-asparagine + ATP = L-asparaginyl-tRNA(Asn) + AMP + diphosphate + H(+). The sequence is that of Asparagine--tRNA ligase from Pseudoalteromonas atlantica (strain T6c / ATCC BAA-1087).